The following is a 138-amino-acid chain: von Willebrand factor C domain-containing protein 2-like (138 aa).

An N-terminal signal peptide occupies residues 1–21 (MALHIHEACILLLVIPGLVTS). A VWFC domain is found at 51-110 (KGCVDDSGFVYKLGERFFPGHSNCPCVCALDGPVCDQPECPKIHPKCTKVEHNGCCPECK).

Peripherally associated with AMPAR complex. AMPAR complex consists of an inner core made of 4 pore-forming GluA/GRIA proteins (GRIA1, GRIA2, GRIA3 and GRIA4) and 4 major auxiliary subunits arranged in a twofold symmetry. One of the two pairs of distinct binding sites is occupied either by CNIH2, CNIH3 or CACNG2, CACNG3. The other harbors CACNG2, CACNG3, CACNG4, CACNG8 or GSG1L. This inner core of AMPAR complex is complemented by outer core constituents binding directly to the GluA/GRIA proteins at sites distinct from the interaction sites of the inner core constituents. Outer core constituents include at least PRRT1, PRRT2, CKAMP44/SHISA9, FRRS1L and NRN1. The proteins of the inner and outer core serve as a platform for other, more peripherally associated AMPAR constituents, including VWC2L. Alone or in combination, these auxiliary subunits control the gating and pharmacology of the AMPAR complex and profoundly impact their biogenesis and protein processing.

It is found in the secreted. The protein resides in the synapse. Its function is as follows. May play a role in neurogenesis. May play a role in bone differentiation and matrix mineralization. The protein is von Willebrand factor C domain-containing protein 2-like (VWC2L) of Macaca fascicularis (Crab-eating macaque).